Consider the following 155-residue polypeptide: Molybdopterin synthase catalytic subunit (155 aa).

Substrate contacts are provided by residues 109–110, Lys-125, and 132–134; these read HR and KKE.

The protein belongs to the MoaE family. MOCS2B subfamily. Heterotetramer; composed of 2 small (MOCS2A) and 2 large (MOCS2B) subunits.

It localises to the cytoplasm. The protein localises to the cytosol. The enzyme catalyses 2 [molybdopterin-synthase sulfur-carrier protein]-C-terminal-Gly-aminoethanethioate + cyclic pyranopterin phosphate + H2O = molybdopterin + 2 [molybdopterin-synthase sulfur-carrier protein]-C-terminal Gly-Gly + 2 H(+). The protein operates within cofactor biosynthesis; molybdopterin biosynthesis. Functionally, catalytic subunit of the molybdopterin synthase complex, a complex that catalyzes the conversion of precursor Z into molybdopterin. Acts by mediating the incorporation of 2 sulfur atoms from thiocarboxylated MOCS2A into precursor Z to generate a dithiolene group. The protein is Molybdopterin synthase catalytic subunit of Taeniopygia guttata (Zebra finch).